The following is a 473-amino-acid chain: Phosphatidylserine synthase 1 (473 aa).

The Cytoplasmic segment spans residues 1–35 (MAACVGSRTLSKDDVNYRLHFRMINEQQVEDITLE). Residues 36–56 (FFYRPHTITLLSFTILSLMAF) form a helical membrane-spanning segment. Over 57 to 72 (AFTRDDSVPEENIWRG) the chain is Lumenal. A helical membrane pass occupies residues 73–93 (ILSVIFFFLIISVLAFPNGPF). At 94-102 (TRPHPAIWR) the chain is on the cytoplasmic side. Residues 103–123 (MVFGLSVLYFLFLVFVLFLNF) form a helical membrane-spanning segment. Residues 124 to 186 (EQVKAVMYWL…AMKALLIRSY (63 aa)) lie on the Lumenal side of the membrane. A helical membrane pass occupies residues 187-207 (GLCWTISITWELTELFFMHLL). Residues 208–216 (PNFAECWWD) are Cytoplasmic-facing. A helical membrane pass occupies residues 217–237 (QVILDILLCNGGGIWLGMVVC). Over 238–286 (RFLEMRTYHWASFKDIHTTTGKIKRAVLQFTPASWTYVRWFDPKSSFQR) the chain is Lumenal. Residues 287–307 (VAGIYLFMIIWQLTELNTFFL) form a helical membrane-spanning segment. The Cytoplasmic portion of the chain corresponds to 308–319 (KHIFVFQASHPL). A helical membrane pass occupies residues 320–342 (SWGRILFIGIITAPTVRQYYAYL). Residues 343-355 (TDTQCKRVGTQCW) lie on the Lumenal side of the membrane. The helical transmembrane segment at 356 to 376 (VFGVIAFLEAIVCIKFGQDLF) threads the bilayer. Over 377 to 380 (SKTQ) the chain is Cytoplasmic. The helical transmembrane segment at 381–401 (ILYVVFWLLCVAFTTFLCLYG) threads the bilayer. Residues 402–473 (MVWYAEYYGH…SKVTNGIGKK (72 aa)) lie on the Lumenal side of the membrane. The disordered stretch occupies residues 420 to 473 (EDSPYSPDASWLHSKFSKGADNSPPKHPVNSESHSSRRRNRHSRSKVTNGIGKK). Positions 455-464 (SRRRNRHSRS) are enriched in basic residues.

The protein belongs to the phosphatidyl serine synthase family.

Its subcellular location is the endoplasmic reticulum membrane. It carries out the reaction a 1,2-diacyl-sn-glycero-3-phosphoethanolamine + L-serine = a 1,2-diacyl-sn-glycero-3-phospho-L-serine + ethanolamine. It catalyses the reaction a 1,2-diacyl-sn-glycero-3-phosphocholine + L-serine = a 1,2-diacyl-sn-glycero-3-phospho-L-serine + choline. The protein operates within phospholipid metabolism; phosphatidylserine biosynthesis. Catalyzes a base-exchange reaction in which the polar head group of phosphatidylethanolamine (PE) or phosphatidylcholine (PC) is replaced by L-serine. Catalyzes mainly the conversion of phosphatidylcholine but also converts, in vitro and to a lesser extent, phosphatidylethanolamine. The sequence is that of Phosphatidylserine synthase 1 (PTDSS1) from Gallus gallus (Chicken).